Reading from the N-terminus, the 246-residue chain is Probable phosphatase ASA_1316 (246 aa).

Residues His8, His10, His16, His41, Glu74, His102, His132, Asp193, and His195 each contribute to the Zn(2+) site.

This sequence belongs to the PHP family. The cofactor is Zn(2+).

This Aeromonas salmonicida (strain A449) protein is Probable phosphatase ASA_1316.